Here is a 441-residue protein sequence, read N- to C-terminus: Eukaryotic translation initiation factor 3 subunit E (441 aa).

Residues 223–407 (IFFNHDNGRT…GTVIMEPTQP (185 aa)) enclose the PCI domain.

Belongs to the eIF-3 subunit E family. In terms of assembly, component of the eukaryotic translation initiation factor 3 (eIF-3) complex (Potential). Binds to the translation initiation factors TIF3F1 and TIF3H1. Associates with the CSN (COP9 signalosome) complex. Interacts directly with CSN1, CSN4, CSN6A, CSN6B, CSN7, CSN8 and TIF3C1. Binds to 40S small ribosomal subunit S9 (RPS9B and RPS9C) via its N-terminal part. Interacts with the 26S proteasome subunit RPN12a via its C-terminal part. Also binds with At1g27930 and At4g30620.

Its subcellular location is the cytoplasm. It is found in the nucleus. Component of the eukaryotic translation initiation factor 3 (eIF-3) complex, which is involved in protein synthesis of a specialized repertoire of mRNAs and, together with other initiation factors, stimulates binding of mRNA and methionyl-tRNAi to the 40S ribosome. The eIF-3 complex specifically targets and initiates translation of a subset of mRNAs involved in cell proliferation (Potential). Negatively regulates translation during flower development. The protein is Eukaryotic translation initiation factor 3 subunit E of Arabidopsis thaliana (Mouse-ear cress).